Reading from the N-terminus, the 321-residue chain is tRNA U34 carboxymethyltransferase (321 aa).

Residues K90, W104, K109, G129, 151 to 153 (DPT), 180 to 181 (IE), M195, Y199, and R314 contribute to the carboxy-S-adenosyl-L-methionine site.

The protein belongs to the class I-like SAM-binding methyltransferase superfamily. CmoB family. Homotetramer.

It catalyses the reaction carboxy-S-adenosyl-L-methionine + 5-hydroxyuridine(34) in tRNA = 5-carboxymethoxyuridine(34) in tRNA + S-adenosyl-L-homocysteine + H(+). Its function is as follows. Catalyzes carboxymethyl transfer from carboxy-S-adenosyl-L-methionine (Cx-SAM) to 5-hydroxyuridine (ho5U) to form 5-carboxymethoxyuridine (cmo5U) at position 34 in tRNAs. This is tRNA U34 carboxymethyltransferase from Mannheimia succiniciproducens (strain KCTC 0769BP / MBEL55E).